The primary structure comprises 315 residues: Olfactory receptor 2V1 (315 aa).

7 helical membrane passes run 31–51 (TVMLVFTVALCGNVLLILLIY), 59–79 (PMYFFLSQLSLMDLMLVCNIV), 100–120 (IQIGFFVSLVGSEGLLLGLMA), 145–165 (IAGSSWAFGILDGIIQMVAAM), 196–216 (FDTLLFACCVFMLLLPFSIIV), 239–259 (LATCSSHLTAVSLFYGAAMFI), and 273–293 (KVVSIFYTVLTPMLNPLIYSL). A disulfide bridge connects residues Cys98 and Cys180.

The protein belongs to the G-protein coupled receptor 1 family.

It localises to the cell membrane. Odorant receptor. Activated by (+) and (-)-limonene. The protein is Olfactory receptor 2V1 of Mus musculus (Mouse).